A 220-amino-acid chain; its full sequence is Phosphatidylinositol phosphate synthase (220 aa).

Transmembrane regions (helical) follow at residues 21-46 (LLRAGFTPDTVTIFGTAASVVAALTL) and 52-72 (LFWGGMAVWLFAMFDMLDGAM). 29-32 (DTVT) is a binding site for a CDP-1,2-diacyl-sn-glycerol. Asp66 and Asp69 together coordinate Mg(2+). Residues Gly70, Arg74, and Thr80 each contribute to the a CDP-1,2-diacyl-sn-glycerol site. Mg(2+)-binding residues include Asp87 and Asp91. Asp91 functions as the Proton acceptor in the catalytic mechanism. The next 4 membrane-spanning stretches (helical) occupy residues 93–110 (VADGAVFAGLVWWAAFGW), 116–134 (VVATLICMITSQVISYVKA), 154–171 (LIIVLAGAIFSGGFGVQW), and 177–194 (MWVLAVASLVTVAQRMHA).

The protein belongs to the CDP-alcohol phosphatidyltransferase class-I family. As to quaternary structure, homodimer. Mg(2+) is required as a cofactor.

Its subcellular location is the cell membrane. It catalyses the reaction a CDP-1,2-diacyl-sn-glycerol + 1D-myo-inositol 3-phosphate = a 1,2-diacyl-sn-glycero-3-phospho-(1D-myo-inositol-3-phosphate) + CMP + H(+). The catalysed reaction is 1,2-di-(9Z-octadecenoyl)-sn-glycero-3-cytidine-5'-diphosphate + 1D-myo-inositol 3-phosphate = 1,2-di-(9Z-octadecenoyl)-sn-glycero-3-phospho-(1D-myo-inositol-3-phosphate) + CMP + H(+). The protein operates within phospholipid metabolism; phosphatidylinositol phosphate biosynthesis. Functionally, catalyzes the conjugation of the 1'-hydroxyl group of D-myo-inositol-3-phosphate (also named L-myo-inositol-1-phosphate) with a lipid tail of cytidine diphosphate diacylglycerol (CDP-DAG), forming phosphatidylinositol phosphate (PIP) and CMP. PIP is a precursor of phosphatidylinositol (PI) which is an essential lipid for mycobacteria required for formation of their cell wall. The sequence is that of Phosphatidylinositol phosphate synthase from Mycobacteroides abscessus (strain ATCC 19977 / DSM 44196 / CCUG 20993 / CIP 104536 / JCM 13569 / NCTC 13031 / TMC 1543 / L948) (Mycobacterium abscessus).